Consider the following 109-residue polypeptide: Hainantoxin-XVIII-3 (109 aa).

A signal peptide spans M1–A18. The propeptide occupies F19 to A46. Cystine bridges form between C47-C62, C55-C68, C59-C108, and C61-C81.

Belongs to the neurotoxin 25 family. F7 subfamily. As to expression, expressed by the venom gland.

The protein resides in the secreted. Functionally, putative ion channel inhibitor. In Cyriopagopus hainanus (Chinese bird spider), this protein is Hainantoxin-XVIII-3.